Reading from the N-terminus, the 70-residue chain is Dermaseptin-H3 (70 aa).

A signal peptide spans 1 to 22; that stretch reads MAFLKKSLFLVLFLGMVSLSIC. The propeptide occupies 23-43; that stretch reads EEEKRENEDEELQEDDEQSEM. Residues 25–44 are disordered; sequence EKRENEDEELQEDDEQSEMK. Positions 30–40 are enriched in acidic residues; it reads EDEELQEDDEQ. The residue at position 70 (L70) is a Leucine amide.

In terms of tissue distribution, expressed by the skin glands.

Its subcellular location is the secreted. Functionally, has antibacterial activity against the Gram-negative bacteria E.coli and P.aeruginosa, and the Gram-positive bacteria S.aureus and M.luteus. Has antiprotozoal activity against L.amazonensis. No hemolytic activity. The protein is Dermaseptin-H3 of Pithecopus hypochondrialis (Orange-legged leaf frog).